Reading from the N-terminus, the 124-residue chain is Sulfiredoxin (124 aa).

It belongs to the sulfiredoxin family. Interacts with tpx1 in response to oxidative stress.

It is found in the cytoplasm. Its subcellular location is the nucleus. The enzyme catalyses S-hydroxy-S-oxy-L-cysteinyl-[peroxiredoxin] + [protein]-dithiol + ATP = S-hydroxy-L-cysteinyl-[peroxiredoxin] + [protein]-disulfide + ADP + phosphate. Its function is as follows. Contributes to oxidative stress resistance by reducing cysteine-sulfinic acid formed under exposure to oxidants in a peroxiredoxin. May catalyze the reduction in a multi-step process by acting both as a specific phosphotransferase and a thioltransferase. This chain is Sulfiredoxin (srx1), found in Schizosaccharomyces pombe (strain 972 / ATCC 24843) (Fission yeast).